Here is a 251-residue protein sequence, read N- to C-terminus: MLTFVGLGLYDAGDISVKGLEAVRASDAVFLEYYTSRLMGTTIEDLVRAYGKEVIVLARADVEQHPEPILDAAAAGDVVVLTGGDPMVSTTHMDLRLRAAARGIPTGIIHGASIQTAVCGLTGLQNYRFGKSCSVPFPQKNWFPLTPYEVVRQNLAADLHTLVYLDIQQDRYMRVGEAIDLLEEMAVRVGGSITTYIGVARAGSVSPVVRAGTADHLRGIDFGGPLHVLIVPATLHPVEQEYLEVFAGLSV.

S-adenosyl-L-methionine contacts are provided by residues L9, D85, V88, 113-114 (SI), L165, A202, and H227.

Belongs to the diphthine synthase family. In terms of assembly, homodimer.

The catalysed reaction is 2-[(3S)-amino-3-carboxypropyl]-L-histidyl-[translation elongation factor 2] + 3 S-adenosyl-L-methionine = diphthine-[translation elongation factor 2] + 3 S-adenosyl-L-homocysteine + 3 H(+). Its pathway is protein modification; peptidyl-diphthamide biosynthesis. S-adenosyl-L-methionine-dependent methyltransferase that catalyzes the trimethylation of the amino group of the modified target histidine residue in translation elongation factor 2 (EF-2), to form an intermediate called diphthine. The three successive methylation reactions represent the second step of diphthamide biosynthesis. The sequence is that of Diphthine synthase from Methanosphaerula palustris (strain ATCC BAA-1556 / DSM 19958 / E1-9c).